The chain runs to 448 residues: Homogentisate 1,2-dioxygenase (448 aa).

The active-site Proton acceptor is the His-303. Positions 346 and 352 each coordinate Fe cation. Tyr-361 and His-382 together coordinate homogentisate. His-382 lines the Fe cation pocket.

It belongs to the homogentisate dioxygenase family. As to quaternary structure, hexamer; dimer of trimers. Fe cation is required as a cofactor.

The enzyme catalyses homogentisate + O2 = 4-maleylacetoacetate + H(+). It functions in the pathway amino-acid degradation; L-phenylalanine degradation; acetoacetate and fumarate from L-phenylalanine: step 4/6. Its function is as follows. Involved in the catabolism of homogentisate (2,5-dihydroxyphenylacetate or 2,5-OH-PhAc), a central intermediate in the degradation of phenylalanine and tyrosine. Catalyzes the oxidative ring cleavage of the aromatic ring of homogentisate to yield maleylacetoacetate. The sequence is that of Homogentisate 1,2-dioxygenase from Rhodopseudomonas palustris (strain ATCC BAA-98 / CGA009).